Consider the following 140-residue polypeptide: ATP synthase epsilon chain, chloroplastic (140 aa).

Belongs to the ATPase epsilon chain family. F-type ATPases have 2 components, CF(1) - the catalytic core - and CF(0) - the membrane proton channel. CF(1) has five subunits: alpha(3), beta(3), gamma(1), delta(1), epsilon(1). CF(0) has three main subunits: a, b and c.

Its subcellular location is the plastid. The protein localises to the chloroplast thylakoid membrane. In terms of biological role, produces ATP from ADP in the presence of a proton gradient across the membrane. The polypeptide is ATP synthase epsilon chain, chloroplastic (Panax ginseng (Korean ginseng)).